The chain runs to 151 residues: 3-dehydroquinate dehydratase (151 aa).

Tyr-26 (proton acceptor) is an active-site residue. Substrate contacts are provided by Asn-77, His-83, and Asp-90. The Proton donor role is filled by His-103. Residues 104–105 (LS) and Arg-114 contribute to the substrate site.

Belongs to the type-II 3-dehydroquinase family. As to quaternary structure, homododecamer.

It catalyses the reaction 3-dehydroquinate = 3-dehydroshikimate + H2O. It participates in metabolic intermediate biosynthesis; chorismate biosynthesis; chorismate from D-erythrose 4-phosphate and phosphoenolpyruvate: step 3/7. Its function is as follows. Catalyzes a trans-dehydration via an enolate intermediate. The sequence is that of 3-dehydroquinate dehydratase from Pelodictyon phaeoclathratiforme (strain DSM 5477 / BU-1).